A 401-amino-acid polypeptide reads, in one-letter code: Imidazolonepropionase (401 aa).

The Fe(3+) site is built by His-70 and His-72. 2 residues coordinate Zn(2+): His-70 and His-72. Residues Arg-79, Tyr-142, and His-175 each contribute to the 4-imidazolone-5-propanoate site. Tyr-142 is a binding site for N-formimidoyl-L-glutamate. His-238 serves as a coordination point for Fe(3+). His-238 serves as a coordination point for Zn(2+). Gln-241 is a 4-imidazolone-5-propanoate binding site. Residue Asp-313 coordinates Fe(3+). Residue Asp-313 participates in Zn(2+) binding. 2 residues coordinate N-formimidoyl-L-glutamate: Asn-315 and Gly-317. Thr-318 contacts 4-imidazolone-5-propanoate.

The protein belongs to the metallo-dependent hydrolases superfamily. HutI family. The cofactor is Zn(2+). It depends on Fe(3+) as a cofactor.

The protein localises to the cytoplasm. It carries out the reaction 4-imidazolone-5-propanoate + H2O = N-formimidoyl-L-glutamate. The protein operates within amino-acid degradation; L-histidine degradation into L-glutamate; N-formimidoyl-L-glutamate from L-histidine: step 3/3. Catalyzes the hydrolytic cleavage of the carbon-nitrogen bond in imidazolone-5-propanoate to yield N-formimidoyl-L-glutamate. It is the third step in the universal histidine degradation pathway. This is Imidazolonepropionase from Xanthomonas axonopodis pv. citri (strain 306).